A 159-amino-acid chain; its full sequence is Phosphopantetheine adenylyltransferase (159 aa).

Residue Ser9 participates in substrate binding. ATP contacts are provided by residues 9–10 and His17; that span reads SF. Substrate is bound by residues Lys41, Leu73, and Arg87. ATP contacts are provided by residues 88 to 90, Glu98, and 123 to 129; these read GLR and YSYVSSS.

Belongs to the bacterial CoaD family. As to quaternary structure, homohexamer. It depends on Mg(2+) as a cofactor.

Its subcellular location is the cytoplasm. It catalyses the reaction (R)-4'-phosphopantetheine + ATP + H(+) = 3'-dephospho-CoA + diphosphate. The protein operates within cofactor biosynthesis; coenzyme A biosynthesis; CoA from (R)-pantothenate: step 4/5. Functionally, reversibly transfers an adenylyl group from ATP to 4'-phosphopantetheine, yielding dephospho-CoA (dPCoA) and pyrophosphate. The sequence is that of Phosphopantetheine adenylyltransferase from Shouchella clausii (strain KSM-K16) (Alkalihalobacillus clausii).